The chain runs to 461 residues: Argininosuccinate lyase (461 aa).

It belongs to the lyase 1 family. Argininosuccinate lyase subfamily.

The protein localises to the cytoplasm. The catalysed reaction is 2-(N(omega)-L-arginino)succinate = fumarate + L-arginine. It functions in the pathway amino-acid biosynthesis; L-arginine biosynthesis; L-arginine from L-ornithine and carbamoyl phosphate: step 3/3. The polypeptide is Argininosuccinate lyase (Dehalococcoides mccartyi (strain CBDB1)).